The following is a 687-amino-acid chain: Chloride channel protein ClC-Ka (687 aa).

The next 4 helical transmembrane spans lie at 52 to 72, 161 to 181, 202 to 222, and 236 to 256; these read FLMT…FAIG, LFLG…AYLG, VAAA…GVLF, and YWRG…LAVF. 4 residues coordinate Ca(2+): glutamate 259, glutamate 261, aspartate 278, and glutamate 281. Transmembrane regions (helical) follow at residues 282–302, 329–349, 396–416, 417–437, 452–472, and 486–506; these read IFFF…YLFC, ALAT…HFLA, FTIF…LILA, TTIP…AAIG, IVTG…AGAA, and LLAF…MAVL. Residues 507 to 687 are Cytoplasmic-facing; the sequence is AANAIAQSCQ…SNLTNPPAPK (181 aa). CBS domains are found at residues 551–609 and 626–684; these read MNHS…EPPS and CPTE…TNPP.

This sequence belongs to the chloride channel (TC 2.A.49) family. CLCNKA subfamily. As to quaternary structure, homodimer. Interacts with BSND.

Its subcellular location is the basolateral cell membrane. It catalyses the reaction chloride(in) = chloride(out). It carries out the reaction bromide(in) = bromide(out). The enzyme catalyses nitrate(in) = nitrate(out). The catalysed reaction is iodide(out) = iodide(in). Its activity is regulated as follows. Activated by extracellular Ca(2+) and inhibited by extracellular acidic pH. Functionally, anion-selective channel permeable to small monovalent anions with ion selectivity for chloride &gt; bromide &gt; nitrate &gt; iodide. Forms a homodimeric channel where each subunit has its own ion conduction pathway. May conduct double-barreled currents controlled by two types of gates, two fast gates that control each subunit independently and a slow common gate that opens and shuts off both subunits simultaneously. Assembles with the regulatory subunit BSND/Barttin for sorting at the basolateral plasma membrane domain and functional switch to the ion conducting state. CLCNKA:BSND channels display mostly a linear current-voltage relationship with fast gating at negative potentials. Mediates transepithelial chloride transport from the lumen to interstitial compartment along the thin ascending limb of Henle's loop, contributing to generation of hypertonic medullary interstitium as a countercurrent system to achieve urine concentration. Conducts chloride currents in the stria vascularis of the inner ear to establish the endocochlear potential necessary for normal hearing. The chain is Chloride channel protein ClC-Ka from Homo sapiens (Human).